Reading from the N-terminus, the 105-residue chain is Defensin-like protein (105 aa).

Positions 1 to 25 (MARSLCFMAFAILAMMLFVAYEVQA) are cleaved as a signal peptide. Cystine bridges form between C28/C72, C39/C59, C45/C66, and C49/C68.

The protein belongs to the DEFL family. Flower. Found in petals, stamen and pistils, but not in sepals. In particular, accumulation in a configuration surrounding the inner reproductive whorls.

It is found in the secreted. The protein localises to the cell wall. It localises to the vacuole. Functionally, involved in floral organogenesis. May play a protective role in flowers by protecting the reproductive organs from potential pathogen attack. This is Defensin-like protein (FST) from Nicotiana tabacum (Common tobacco).